Consider the following 322-residue polypeptide: uncharacterized protein (322 aa).

Helical transmembrane passes span 5–25 (LISI…IPGI), 37–57 (IGPS…FKET), 71–91 (LPLL…LTSF), 109–129 (MMYV…MPFI), 153–173 (SFKM…LPFV), 189–209 (LFSL…VIMI), 245–265 (LLLI…APDI), 268–288 (PITI…ATFV), and 300–320 (IYPI…FALL).

The protein localises to the cell membrane. This is an uncharacterized protein from Methanocaldococcus jannaschii (strain ATCC 43067 / DSM 2661 / JAL-1 / JCM 10045 / NBRC 100440) (Methanococcus jannaschii).